Reading from the N-terminus, the 172-residue chain is NAD(P)H-quinone oxidoreductase subunit I, chloroplastic (172 aa).

2 consecutive 4Fe-4S ferredoxin-type domains span residues 55–84 and 95–124; these read GRIH…VDWK and LNYS…MTEE. Residues cysteine 64, cysteine 67, cysteine 70, cysteine 74, cysteine 104, cysteine 107, cysteine 110, and cysteine 114 each contribute to the [4Fe-4S] cluster site.

It belongs to the complex I 23 kDa subunit family. As to quaternary structure, NDH is composed of at least 16 different subunits, 5 of which are encoded in the nucleus. [4Fe-4S] cluster is required as a cofactor.

It localises to the plastid. It is found in the chloroplast thylakoid membrane. It catalyses the reaction a plastoquinone + NADH + (n+1) H(+)(in) = a plastoquinol + NAD(+) + n H(+)(out). The catalysed reaction is a plastoquinone + NADPH + (n+1) H(+)(in) = a plastoquinol + NADP(+) + n H(+)(out). NDH shuttles electrons from NAD(P)H:plastoquinone, via FMN and iron-sulfur (Fe-S) centers, to quinones in the photosynthetic chain and possibly in a chloroplast respiratory chain. The immediate electron acceptor for the enzyme in this species is believed to be plastoquinone. Couples the redox reaction to proton translocation, and thus conserves the redox energy in a proton gradient. This chain is NAD(P)H-quinone oxidoreductase subunit I, chloroplastic, found in Olimarabidopsis pumila (Dwarf rocket).